The sequence spans 212 residues: Maleylacetoacetate isomerase (212 aa).

The 83-residue stretch at 1 to 83 (MKLYTYYRST…YLEERYPQPA (83 aa)) folds into the GST N-terminal domain. One can recognise a GST C-terminal domain in the interval 88 to 211 (DPLRRARERG…HPANQPDTPA (124 aa)).

This sequence belongs to the GST superfamily. Zeta family.

The catalysed reaction is 4-maleylacetoacetate = 4-fumarylacetoacetate. It participates in amino-acid degradation; L-phenylalanine degradation; acetoacetate and fumarate from L-phenylalanine: step 5/6. The polypeptide is Maleylacetoacetate isomerase (maiA) (Pseudomonas aeruginosa (strain ATCC 15692 / DSM 22644 / CIP 104116 / JCM 14847 / LMG 12228 / 1C / PRS 101 / PAO1)).